A 296-amino-acid chain; its full sequence is uncharacterized protein (296 aa).

An FAD-binding FR-type domain is found at 1-95 (MYKIVSKKEL…VGPLGVPSEF (95 aa)).

This is an uncharacterized protein from Clostridium beijerinckii (Clostridium MP).